The sequence spans 322 residues: Ribose-phosphate pyrophosphokinase 1 (322 aa).

ATP-binding positions include 39–41 (DGE) and 98–99 (RQ). 2 residues coordinate Mg(2+): histidine 132 and aspartate 173. Residue lysine 196 is part of the active site. D-ribose 5-phosphate contacts are provided by residues arginine 198, aspartate 224, and 228 to 232 (DTAGT).

Belongs to the ribose-phosphate pyrophosphokinase family. Class I subfamily. In terms of assembly, homohexamer. It depends on Mg(2+) as a cofactor.

It is found in the cytoplasm. The enzyme catalyses D-ribose 5-phosphate + ATP = 5-phospho-alpha-D-ribose 1-diphosphate + AMP + H(+). The protein operates within metabolic intermediate biosynthesis; 5-phospho-alpha-D-ribose 1-diphosphate biosynthesis; 5-phospho-alpha-D-ribose 1-diphosphate from D-ribose 5-phosphate (route I): step 1/1. In terms of biological role, involved in the biosynthesis of the central metabolite phospho-alpha-D-ribosyl-1-pyrophosphate (PRPP) via the transfer of pyrophosphoryl group from ATP to 1-hydroxyl of ribose-5-phosphate (Rib-5-P). This is Ribose-phosphate pyrophosphokinase 1 from Streptococcus agalactiae serotype III (strain NEM316).